An 815-amino-acid polypeptide reads, in one-letter code: (-)-kolavenyl diphosphate synthase TPS28, chloroplastic (815 aa).

The transit peptide at 1–51 (MFMSSSSSSHARRPQLSSFSYLHPPLPFPGLSFFNTRDKRVNFDSTRIICI) directs the protein to the chloroplast. Position 247 (K247) interacts with substrate. Residues D379 and D381 each contribute to the Mg(2+) site. Residues 379–382 (DIDD) carry the DXDD motif motif. K465 contributes to the substrate binding site.

It belongs to the terpene synthase family. Tpsc subfamily. It depends on Mg(2+) as a cofactor.

The protein resides in the plastid. It is found in the chloroplast. The catalysed reaction is (2E,6E,10E)-geranylgeranyl diphosphate = (-)-kolavenyl diphosphate. With respect to regulation, inhibited by high concentrations of magnesium. Functionally, diterpene synthase that catalyzes the formation of (-)-kolavenyl diphosphate from geranylgeranyl diphosphate (GGPP). In Tripterygium wilfordii (Thunder God vine), this protein is (-)-kolavenyl diphosphate synthase TPS28, chloroplastic.